Reading from the N-terminus, the 333-residue chain is Ribosomal RNA small subunit methyltransferase C (333 aa).

Belongs to the methyltransferase superfamily. RsmC family. In terms of assembly, monomer.

It is found in the cytoplasm. The enzyme catalyses guanosine(1207) in 16S rRNA + S-adenosyl-L-methionine = N(2)-methylguanosine(1207) in 16S rRNA + S-adenosyl-L-homocysteine + H(+). In terms of biological role, specifically methylates the guanine in position 1207 of 16S rRNA in the 30S particle. This is Ribosomal RNA small subunit methyltransferase C from Actinobacillus succinogenes (strain ATCC 55618 / DSM 22257 / CCUG 43843 / 130Z).